We begin with the raw amino-acid sequence, 1291 residues long: Cytoplasmic FMR1-interacting protein (1291 aa).

The tract at residues 1270–1291 (PSVISSSSHYQDPQKLRQSINN) is disordered. The segment covering 1271–1291 (SVISSSSHYQDPQKLRQSINN) has biased composition (polar residues).

The protein belongs to the CYFIP family. In terms of assembly, interacts with Fmr1 and Rac1. Component of the WAVE complex composed of Hem/Kette, Scar/Wave and Cyfip where it binds through its C-terminus directly to Hem. As to expression, in the embryo, expressed mainly in the gut and in the developing central nervous system where high levels of expression are found in the CNS neuropile. Expression in the gut diminishes as development proceeds (at protein level). In the adult, expressed specifically in the nervous system.

Its subcellular location is the cytoplasm. Its function is as follows. Plays a role in guidance and morphology of central and peripheral axons and in synaptic morphology. Also required for formation of cell membrane protrusions and for bristle development. Plays a role in regulating mitochondrial activity, energy metabolism and membrane potential which maintains normal gamma-aminobutyric acid (GABA) signaling and ensures normal social behavior. This Drosophila melanogaster (Fruit fly) protein is Cytoplasmic FMR1-interacting protein.